The following is a 178-amino-acid chain: MYHQLILMALIGVIMANVVPFSMSNIPEEYKEFIPEEVKNFYKNLTQEDRQILRELASKHATFTNEDAALEALKNKSDKLYQKAVELRNFVKAKIDSLKPDAKTFVDEIIAKVRSLRPEDGQKLDMEKIKQAARDIIAKYEALNEETKEELKATFPNTTKIITNEKFKRIANSFLQKN.

The N-terminal stretch at 1–16 (MYHQLILMALIGVIMA) is a signal peptide. N-linked (GlcNAc...) asparagine glycosylation is found at asparagine 44 and asparagine 75. Coiled coils occupy residues 67–89 (DAAL…ELRN) and 123–154 (KLDM…LKAT). N-linked (GlcNAc...) asparagine glycosylation is present at asparagine 157.

Belongs to the fatty-acid and retinol-binding protein (FARBP) family. Post-translationally, N-glycosylated.

It localises to the secreted. In terms of biological role, binds retinol and different fatty acids. The sequence is that of Fatty-acid and retinol-binding protein 1 from Onchocerca gutturosa.